Consider the following 268-residue polypeptide: Nuclear protein UL4 homolog (268 aa).

It belongs to the alphaherpesvirinae HHV-1 UL4 family.

Its subcellular location is the host nucleus. The polypeptide is Nuclear protein UL4 homolog (MDV016) (Gallid herpesvirus 2 (strain Chicken/Md5/ATCC VR-987) (GaHV-2)).